A 387-amino-acid polypeptide reads, in one-letter code: Eukaryotic translation initiation factor 3 subunit M (387 aa).

Residues 181–340 (LSSKVMIELL…QKVHISSTMH (160 aa)) form the PCI domain.

The protein belongs to the eIF-3 subunit M family. Component of the eukaryotic translation initiation factor 3 (eIF-3) complex. The eIF-3 complex interacts with pix.

The protein resides in the cytoplasm. The protein localises to the golgi apparatus. In terms of biological role, component of the eukaryotic translation initiation factor 3 (eIF-3) complex, which is involved in protein synthesis of a specialized repertoire of mRNAs and, together with other initiation factors, stimulates binding of mRNA and methionyl-tRNAi to the 40S ribosome. The eIF-3 complex specifically targets and initiates translation of a subset of mRNAs involved in cell proliferation. The protein is Eukaryotic translation initiation factor 3 subunit M of Drosophila sechellia (Fruit fly).